A 150-amino-acid chain; its full sequence is Snaclec bothrojaracin subunit beta (150 aa).

Positions 1–23 (MGRFIFVSFGLLVVFLSLSGTAA) are cleaved as a signal peptide. Disulfide bonds link Cys25–Cys36, Cys53–Cys146, and Cys123–Cys138. In terms of domain architecture, C-type lectin spans 32–147 (YEGSCYRVFE…CTKLEYFVCE (116 aa)).

Belongs to the snaclec family. As to quaternary structure, heterodimer of subunits alpha and beta; disulfide-linked. Expressed by the venom gland.

The protein resides in the secreted. Functionally, this potent antithrombotic agent acts in a calcium-independent manner. Exerts its anticoagulant effect by two distinct mechanisms. It binds to activated thrombin through exosite 1, blocking fibrinogen clotting, platelet activation, factor V activation and other effects, and it interacts with prothrombin (F2), decreasing its proteolytic activation -especially in the presence of factor Va. In vivo, intravenous injection before thrombosis induction causes a significant decrease in thrombus weight. Furthermore, BJC shows a prolonged effect by remaining in the plasma bound to prothrombin for at least 12 hours. The protein is Snaclec bothrojaracin subunit beta of Bothrops jararaca (Jararaca).